A 381-amino-acid chain; its full sequence is MKIVADQNIPALSDLLSGAGTLSYFSERIPPQKLLAEADALLVRSVTQVDEVLLEQAPELKFVASATIGTEHINLQALEERGIGFAHAPGANAQSVGEYVLCAVLNWLSDQPRYVADEIDVAIVGAGHTGKAAGKRLEALGLNVHYYDPPLCKKGVKFVHDHWQRVLTADIISCHVPLTRDGDFPTQHLFENTALQSLHSQQLLINASRGAVIDNNALLERVEQGERPSLVLDVWENEPEVLSGLVPYVDIATPHIAGHSLEGKVGGAVMISNALLEHFGKPADKTLSDVLPGKAWNERDAGGLNSLESLNLWAKEHYDLFRDDELFRQQGLTTEGFDSLRRNYRKESPRREFINQVVTCHNSEQYIQFLQLGFSARLLSK.

Substrate-binding residues include Ser-45 and Thr-67. NAD(+) contacts are provided by residues Asp-148, 207-209 (ASR), and Asp-233. Arg-209 is a catalytic residue. Glu-238 is a catalytic residue. The active-site Proton donor is the His-255. Gly-258 is a binding site for NAD(+).

Belongs to the D-isomer specific 2-hydroxyacid dehydrogenase family. PdxB subfamily. In terms of assembly, homodimer.

The protein localises to the cytoplasm. It carries out the reaction 4-phospho-D-erythronate + NAD(+) = (R)-3-hydroxy-2-oxo-4-phosphooxybutanoate + NADH + H(+). It participates in cofactor biosynthesis; pyridoxine 5'-phosphate biosynthesis; pyridoxine 5'-phosphate from D-erythrose 4-phosphate: step 2/5. Functionally, catalyzes the oxidation of erythronate-4-phosphate to 3-hydroxy-2-oxo-4-phosphonooxybutanoate. The polypeptide is Erythronate-4-phosphate dehydrogenase (Idiomarina loihiensis (strain ATCC BAA-735 / DSM 15497 / L2-TR)).